The chain runs to 396 residues: MSVRLVLAKGREKSLLRRHPWVFSGAVARMEGKASLGETIDIVDHQGKWLARGAYSPASQIRARVWTFDPSESIDIAFFTRRLQQAQKWRDWLAQKDGLDSYRLIAGESDGLPGITIDRFGNFLVLQLLSAGAEYQRAALISALQTLYPECAIYDRSDVAVRKKEGMELTQGPITGELPPALLPIEEHGMKLLVDIQHGHKTGYYLDQRDSRLATRRYVENKRVLNCFSYTGGFAVSALMGGCSQVVSVDTSHEALDIARQNVELNKLDLSKAEFVRDDVFKLLRTYRDRGEKFDVIVMDPPKFVENKSQLMGACRGYKDINMLAIQLLNEGGILLTFSCSGLMTSDLFQKIIADAAIDAGRDVQFIEQFRQAADHPVIATYPEGLYLKGFACRVM.

A PUA domain is found at 2-81 (SVRLVLAKGR…ESIDIAFFTR (80 aa)).

Belongs to the methyltransferase superfamily. RlmI family.

It is found in the cytoplasm. The enzyme catalyses cytidine(1962) in 23S rRNA + S-adenosyl-L-methionine = 5-methylcytidine(1962) in 23S rRNA + S-adenosyl-L-homocysteine + H(+). In terms of biological role, specifically methylates the cytosine at position 1962 (m5C1962) of 23S rRNA. This Escherichia coli O1:K1 / APEC protein is Ribosomal RNA large subunit methyltransferase I.